Here is a 401-residue protein sequence, read N- to C-terminus: Acetylornithine aminotransferase (401 aa).

Pyridoxal 5'-phosphate is bound by residues 121 to 122 and phenylalanine 154; that span reads GA. Arginine 157 serves as a coordination point for N(2)-acetyl-L-ornithine. 239–242 is a pyridoxal 5'-phosphate binding site; that stretch reads DEVQ. Lysine 268 bears the N6-(pyridoxal phosphate)lysine mark. Serine 296 serves as a coordination point for N(2)-acetyl-L-ornithine. Threonine 297 serves as a coordination point for pyridoxal 5'-phosphate.

The protein belongs to the class-III pyridoxal-phosphate-dependent aminotransferase family. ArgD subfamily. As to quaternary structure, homodimer. Pyridoxal 5'-phosphate is required as a cofactor.

Its subcellular location is the cytoplasm. The catalysed reaction is N(2)-acetyl-L-ornithine + 2-oxoglutarate = N-acetyl-L-glutamate 5-semialdehyde + L-glutamate. The protein operates within amino-acid biosynthesis; L-arginine biosynthesis; N(2)-acetyl-L-ornithine from L-glutamate: step 4/4. This Myxococcus xanthus protein is Acetylornithine aminotransferase.